The following is a 286-amino-acid chain: PTS system mannose-specific EIID component (286 aa).

N-formylmethionine is present on Met1. At 1–17 the chain is on the cytoplasmic side; sequence MSEMVDTTQTTTEKKLT. Residues 14–284 enclose the PTS EIID domain; it reads KKLTQSDIRG…GIAGYACGLL (271 aa). An intramembrane segment occupies 18-55; that stretch reads QSDIRGVFLRSNLFQGSWNFERMQALGFCFSMVPAIRR. Residues 56-62 lie on the Cytoplasmic side of the membrane; the sequence is LYPENNE. The stretch at 63–95 is an intramembrane region; that stretch reads ARKQAIRRHLEFFNTQPFVAAPILGVTLALEEQ. The Cytoplasmic portion of the chain corresponds to 96–103; that stretch reads RANGAEID. A transmembrane helix spans residues 104–143; sequence DGAINGIKVGLMGPLAGVGDPIFWGTVRPVFAALGAGIAM. Over 144 to 147 the chain is Periplasmic; that stretch reads SGSL. The chain crosses the lipid bilayer at residues 148–176; the sequence is LGPLLFFILFNLVRLATRYYGVAYGYSKG. The Cytoplasmic portion of the chain corresponds to 177–186; sequence IDIVKDMGGG. A transmembrane helix spans residues 187–212; it reads FLQKLTEGASILGLFVMGALVNKWTH. Topologically, residues 213–244 are periplasmic; sequence VNIPLVVSRITDQTGKEHVTTVQTILDQLMPG. A transmembrane helix spans residues 245-258; that stretch reads LVPLLLTFACMWLL. Topologically, residues 259–264 are cytoplasmic; the sequence is RKKVNP. The chain crosses the lipid bilayer at residues 265–283; the sequence is LWIIVGFFVIGIAGYACGL. The Periplasmic segment spans residues 284 to 286; it reads LGL.

As to quaternary structure, homotrimer of protomers that are composed of two subunits, IIC and IID.

The protein localises to the cell inner membrane. The phosphoenolpyruvate-dependent sugar phosphotransferase system (sugar PTS), a major carbohydrate active transport system, catalyzes the phosphorylation of incoming sugar substrates concomitantly with their translocation across the cell membrane. The enzyme II ManXYZ PTS system is involved in mannose transport. The protein is PTS system mannose-specific EIID component (manZ) of Escherichia coli O6:H1 (strain CFT073 / ATCC 700928 / UPEC).